Here is a 289-residue protein sequence, read N- to C-terminus: MEAKEQDVSLGANKFPERQPLGIAAQSQDEPKDYQEPPPAPLFEPSELTSWSFYRAGIAEFIATFLFLYITVLTVMGVVRESSKCKTVGIQGIAWAFGGMIFALVYCTAGISGGHINPAVTFGLFLARKLSLTRAIFYMVMQVLGAICGAGVVKGFEGKQRFGDLNGGANFVAPGYTKGDGLGAEIVGTFILVYTVFSATDAKRSARDSHVPILAPLPIGFAVFLVHLATIPITGTGINPARSLGAAIVFNKKIGWNDHWIFWVGPFIGAALAALYHQVVIRAIPFKSK.

The interval 1–39 (MEAKEQDVSLGANKFPERQPLGIAAQSQDEPKDYQEPPP) is disordered. At 1–57 (MEAKEQDVSLGANKFPERQPLGIAAQSQDEPKDYQEPPPAPLFEPSELTSWSFYRAG) the chain is on the cytoplasmic side. A helical transmembrane segment spans residues 58 to 78 (IAEFIATFLFLYITVLTVMGV). At 79–91 (VRESSKCKTVGIQ) the chain is on the extracellular side. A helical transmembrane segment spans residues 92–112 (GIAWAFGGMIFALVYCTAGIS). Over 113–135 (GGHINPAVTFGLFLARKLSLTRA) the chain is Cytoplasmic. An NPA 1 motif is present at residues 117–119 (NPA). A helical membrane pass occupies residues 136–156 (IFYMVMQVLGAICGAGVVKGF). Residues 157-178 (EGKQRFGDLNGGANFVAPGYTK) are Extracellular-facing. Residues 179–199 (GDGLGAEIVGTFILVYTVFSA) traverse the membrane as a helical segment. Residues 200–212 (TDAKRSARDSHVP) are Cytoplasmic-facing. A helical membrane pass occupies residues 213-233 (ILAPLPIGFAVFLVHLATIPI). Residues 234 to 260 (TGTGINPARSLGAAIVFNKKIGWNDHW) are Extracellular-facing. The NPA 2 motif lies at 239–241 (NPA). A helical transmembrane segment spans residues 261–281 (IFWVGPFIGAALAALYHQVVI). The Cytoplasmic portion of the chain corresponds to 282–289 (RAIPFKSK).

Belongs to the MIP/aquaporin (TC 1.A.8) family. PIP (TC 1.A.8.11) subfamily.

It localises to the cell membrane. Functionally, aquaporins facilitate the transport of water and small neutral solutes across cell membranes. This chain is Probable aquaporin PIP-type 7a (TRG-31), found in Pisum sativum (Garden pea).